Reading from the N-terminus, the 241-residue chain is Ribonuclease 3 (241 aa).

In terms of domain architecture, RNase III spans 16–144; sequence HAEFEKKINY…VIGAIFQDGG (129 aa). E57 provides a ligand contact to Mg(2+). Residues D61 and E133 contribute to the active site. E133 provides a ligand contact to Mg(2+). The DRBM domain occupies 171–240; that stretch reads DAKSRLQEIL…AALAIKKIES (70 aa).

Belongs to the ribonuclease III family. In terms of assembly, homodimer. Requires Mg(2+) as cofactor.

The protein localises to the cytoplasm. It catalyses the reaction Endonucleolytic cleavage to 5'-phosphomonoester.. Digests double-stranded RNA. Involved in the processing of primary rRNA transcript to yield the immediate precursors to the large and small rRNAs (23S and 16S). Processes some mRNAs, and tRNAs when they are encoded in the rRNA operon. Processes pre-crRNA and tracrRNA of type II CRISPR loci if present in the organism. The protein is Ribonuclease 3 of Desulfotalea psychrophila (strain LSv54 / DSM 12343).